The sequence spans 107 residues: RNA polymerase II transcriptional coactivator KIWI (107 aa).

Residues 1-40 (MSSRGKRKDEDVRASDDESETHAPAKKVAKPADDSDQSDD) are disordered. Positions 7 to 23 (RKDEDVRASDDESETHA) are enriched in basic and acidic residues.

Belongs to the transcriptional coactivator PC4 family.

The protein localises to the nucleus. In terms of biological role, general coactivator that functions cooperatively with TAFs and mediates functional interactions between upstream activators and the general transcriptional machinery. Binds single-stranded DNA. This chain is RNA polymerase II transcriptional coactivator KIWI (KIWI), found in Arabidopsis thaliana (Mouse-ear cress).